The primary structure comprises 198 residues: Probable GTP-binding protein EngB (198 aa).

In terms of domain architecture, EngB-type G spans 22–195; the sequence is DLPEIALAGR…WKAIHKFTKT (174 aa). Residues 30–37, 57–61, 75–78, 142–145, and 174–176 contribute to the GTP site; these read GRSNVGKS, GKTQT, DVPG, TKAD, and FSS. Mg(2+)-binding residues include Ser-37 and Thr-59.

It belongs to the TRAFAC class TrmE-Era-EngA-EngB-Septin-like GTPase superfamily. EngB GTPase family. Mg(2+) is required as a cofactor.

Necessary for normal cell division and for the maintenance of normal septation. This chain is Probable GTP-binding protein EngB, found in Bacillus cereus (strain B4264).